The following is a 150-amino-acid chain: MQIILLEKIGGLGNLGDIVTVKNGYARNFLIPAGKAKRATEANMKEFEARRAELEAKQAEILADARVRQEKLDGQTITVAQKAGVDGRLFGSVTNADIAAAIVAAGIEAVKANVRLPNGPLKAVGEYEVEVALHTDAVAKITVAVVAATE.

The protein belongs to the bacterial ribosomal protein bL9 family.

In terms of biological role, binds to the 23S rRNA. In Neisseria meningitidis serogroup A / serotype 4A (strain DSM 15465 / Z2491), this protein is Large ribosomal subunit protein bL9.